The sequence spans 188 residues: Putative pre-16S rRNA nuclease (188 aa).

Residues 156 to 188 form a disordered region; it reads LRQGDAAPGGSDDERDEDGDTDGEDGGGDGGGE. Residues 166–188 show a composition bias toward acidic residues; it reads SDDERDEDGDTDGEDGGGDGGGE.

The protein belongs to the YqgF nuclease family.

It localises to the cytoplasm. In terms of biological role, could be a nuclease involved in processing of the 5'-end of pre-16S rRNA. The sequence is that of Putative pre-16S rRNA nuclease from Rhodospirillum centenum (strain ATCC 51521 / SW).